The following is a 100-amino-acid chain: MAKKSMIARDVKRKKMAERYAAKRSALMAAFNSAADPMSRLEIHRKIQALPRNSAPTRIRNRCWATGKPRGVYRDFGLCRNQLRERAHKGELPGVVKSSW.

The protein belongs to the universal ribosomal protein uS14 family. As to quaternary structure, part of the 30S ribosomal subunit. Contacts proteins S3 and S10.

Functionally, binds 16S rRNA, required for the assembly of 30S particles and may also be responsible for determining the conformation of the 16S rRNA at the A site. The protein is Small ribosomal subunit protein uS14 of Synechococcus sp. (strain CC9902).